A 537-amino-acid polypeptide reads, in one-letter code: Frizzled-4 (537 aa).

An N-terminal signal peptide occupies residues methionine 1–glycine 36. Over phenylalanine 37–serine 212 the chain is Extracellular. The FZ domain maps to glutamate 40–glycine 161. Cystine bridges form between cysteine 45/cysteine 106, cysteine 53/cysteine 99, cysteine 90/cysteine 128, cysteine 117/cysteine 158, cysteine 121/cysteine 145, cysteine 181/cysteine 200, cysteine 204/cysteine 282, and cysteine 302/cysteine 377. An N-linked (GlcNAc...) asparagine glycan is attached at asparagine 59. The N-linked (GlcNAc...) asparagine glycan is linked to asparagine 144. A helical membrane pass occupies residues arginine 213 to isoleucine 243. Topologically, residues aspartate 244 to serine 249 are cytoplasmic. Residues tyrosine 250–valine 275 traverse the membrane as a helical segment. The Extracellular portion of the chain corresponds to glycine 276–asparagine 299. The chain crosses the membrane as a helical span at residues threonine 300–leucine 333. Residues lysine 334 to glycine 336 are Cytoplasmic-facing. Residues histidine 337–methionine 365 traverse the membrane as a helical segment. The Extracellular segment spans residues arginine 366–asparagine 383. Residues leucine 384–leucine 410 form a helical membrane-spanning segment. Residues valine 411–glutamate 431 are Cytoplasmic-facing. A helical transmembrane segment spans residues arginine 432–serine 460. Over asparagine 461–asparagine 473 the chain is Extracellular. The chain crosses the membrane as a helical span at residues methionine 474 to isoleucine 495. Over tryptophan 496–valine 537 the chain is Cytoplasmic. The Lys-Thr-X-X-X-Trp motif, mediates interaction with the PDZ domain of Dvl family members motif lies at lysine 499–tryptophan 504. The short motif at threonine 535–valine 537 is the PDZ-binding element.

It belongs to the G-protein coupled receptor Fz/Smo family. Interacts with MAGI3 and NDP. Component of a complex, at least composed of TSPAN12, FZD4 and norrin (NDP). Interacts (via FZ domain) with TSKU; TSKU competes with WNT2B for binding to FZD4, inhibiting Wnt signaling and repressing peripheral eye development. Interacts with glypican GPC3. Ubiquitinated by ZNRF3, leading to its degradation by the proteasome. As to expression, expressed in chondrocytes.

It is found in the cell membrane. Its function is as follows. Receptor for Wnt proteins. Most frizzled receptors are coupled to the beta-catenin (CTNNB1) canonical signaling pathway, which leads to the activation of disheveled proteins, inhibition of GSK-3 kinase, nuclear accumulation of beta-catenin (CTNNB1) and activation of Wnt target genes. Plays a critical role in retinal vascularization by acting as a receptor for Wnt proteins and norrin (NDP). In retina, it can be activated by Wnt protein-binding and also by Wnt-independent signaling via binding of norrin (NDP), promoting in both cases beta-catenin (CTNNB1) accumulation and stimulation of LEF/TCF-mediated transcriptional programs. A second signaling pathway involving PKC and calcium fluxes has been seen for some family members, but it is not yet clear if it represents a distinct pathway or if it can be integrated in the canonical pathway, as PKC seems to be required for Wnt-mediated inactivation of GSK-3 kinase. Both pathways seem to involve interactions with G-proteins. May be involved in transduction and intercellular transmission of polarity information during tissue morphogenesis and/or in differentiated tissues. Activation by Wnt5A stimulates PKC activity via a G-protein-dependent mechanism. This is Frizzled-4 (Fzd4) from Mus musculus (Mouse).